A 251-amino-acid chain; its full sequence is MPNQGPVSDWTECSSSAEPPAVARAEGGGGGSAGHSYYQNSKDRIKDGHKVNSPRAKLQELWKMPQTVHTPKSMTEPSFLKHPDLTLVEKHYLCSVAKIYNANYLRTLMKRHYMHVIQRSSQKPGVLTHHRGHLSSRYSQKQHYPCTTWRHQLEREDLGPPNTAAASAPEMIQHSLWRPVRNKEGLKTGYASKTRCKSLKIFRKPGRPFMQSVSANDSESYMNEEKKEEDLLNKCMQSMSIEEQGEHLMLT.

Positions 1 to 16 (MPNQGPVSDWTECSSS) are enriched in polar residues. A disordered region spans residues 1–49 (MPNQGPVSDWTECSSSAEPPAVARAEGGGGGSAGHSYYQNSKDRIKDGH).

This sequence belongs to the FAM216 family.

The sequence is that of Protein FAM216A (FAM216A) from Bos taurus (Bovine).